Reading from the N-terminus, the 210-residue chain is Somatotropin (210 aa).

An N-terminal signal peptide occupies residues 1-22; that stretch reads MAKALVLLSLVLVSVFVNNGTA. His38 contributes to the Zn(2+) binding site. A disulfide bridge links Cys71 with Cys183. Glu192 is a Zn(2+) binding site. A disulfide bond links Cys200 and Cys208.

It belongs to the somatotropin/prolactin family.

The protein localises to the secreted. Functionally, growth hormone plays an important role in growth control and is involved in the regulation of several anabolic processes. Implicated as an osmoregulatory substance important for seawater adaptation. The protein is Somatotropin (gh) of Misgurnus mizolepis (Chinese weatherloach).